A 156-amino-acid polypeptide reads, in one-letter code: Small ribosomal subunit protein uS7 (156 aa).

It belongs to the universal ribosomal protein uS7 family. Part of the 30S ribosomal subunit. Contacts proteins S9 and S11.

Its function is as follows. One of the primary rRNA binding proteins, it binds directly to 16S rRNA where it nucleates assembly of the head domain of the 30S subunit. Is located at the subunit interface close to the decoding center, probably blocks exit of the E-site tRNA. The protein is Small ribosomal subunit protein uS7 of Geobacillus kaustophilus (strain HTA426).